The chain runs to 285 residues: Casein kinase II subunit beta-2 (285 aa).

The segment at 226–285 is disordered; it reads FKDAEDEAELDDDDEEEEEEEEEEEELAAMDEAEGAQQQHAAAAAGTATGGVAAGGEGVH. Positions 229–259 are enriched in acidic residues; the sequence is AEDEAELDDDDEEEEEEEEEEEELAAMDEAE. Over residues 260 to 272 the composition is skewed to low complexity; sequence GAQQQHAAAAAGT. The segment covering 273-285 has biased composition (gly residues); sequence ATGGVAAGGEGVH.

Belongs to the casein kinase 2 subunit beta family. Tetramer composed of two alpha chains, one beta chain and one beta' chain. Phosphorylated by alpha subunit.

Functionally, regulatory subunit of casein kinase II/CK2. As part of the kinase complex regulates the basal catalytic activity of the alpha subunit a constitutively active serine/threonine-protein kinase that phosphorylates a large number of substrates containing acidic residues C-terminal to the phosphorylated serine or threonine. The protein is Casein kinase II subunit beta-2 (ckb-2) of Neurospora crassa (strain ATCC 24698 / 74-OR23-1A / CBS 708.71 / DSM 1257 / FGSC 987).